The primary structure comprises 387 residues: Paralemmin-1 (387 aa).

The residue at position 1 (Met-1) is an N-acetylmethionine. A coiled-coil region spans residues 9 to 101 (TSQQERLQAI…EKEIEVLERG (93 aa)). Composition is skewed to basic and acidic residues over residues 31–41 (KRRQLEDERRQ) and 69–102 (DLRR…ERGD). A disordered region spans residues 31-160 (KRRQLEDERR…VSNTPLRTVD (130 aa)). Positions 104–117 (APATAKENAAAPSP) are enriched in low complexity. Phosphoserine is present on residues Ser-116 and Ser-124. 2 positions are modified to phosphothreonine: Thr-141 and Thr-145. Ser-162 carries the post-translational modification Phosphoserine. Phosphothreonine is present on Thr-243. Ser-245 is modified (phosphoserine). 2 disordered regions span residues 247–296 (AGST…GQEP) and 335–378 (AEPK…DMKK). Over residues 286–296 (GPPGIQPGQEP) the composition is skewed to low complexity. Ser-346 is modified (phosphoserine). The residue at position 367 (Thr-367) is a Phosphothreonine. Ser-369 bears the Phosphoserine mark. Residues Cys-381 and Cys-383 are each lipidated (S-palmitoyl cysteine). Position 384 is a cysteine methyl ester (Cys-384). Residue Cys-384 is the site of S-farnesyl cysteine attachment. Positions 385 to 387 (SIM) are cleaved as a propeptide — removed in mature form.

The protein belongs to the paralemmin family. In terms of assembly, interacts with dopamine receptor DRD3. As to expression, widely expressed with highest expression in brain and testis and intermediate expression in heart and adrenal gland.

It is found in the cell membrane. Its subcellular location is the cell projection. The protein resides in the filopodium membrane. It localises to the axon. The protein localises to the dendrite. It is found in the dendritic spine. Its subcellular location is the basolateral cell membrane. The protein resides in the apicolateral cell membrane. Involved in plasma membrane dynamics and cell process formation. Isoform 1 and isoform 2 are necessary for axonal and dendritic filopodia induction, for dendritic spine maturation and synapse formation in a palmitoylation-dependent manner. The chain is Paralemmin-1 (PALM) from Homo sapiens (Human).